Reading from the N-terminus, the 338-residue chain is Holliday junction branch migration complex subunit RuvB (338 aa).

The disordered stretch occupies residues 1 to 22 (MVDDERVVSPETADDHEDSVEK). Positions 4-185 (DERVVSPETA…FGIVEHMAYY (182 aa)) are large ATPase domain (RuvB-L). ATP-binding positions include leucine 24, arginine 25, glycine 66, lysine 69, threonine 70, threonine 71, 132 to 134 (EDF), arginine 175, tyrosine 185, and arginine 222. Residue threonine 70 coordinates Mg(2+). The tract at residues 186-257 (ETTDLQEIVL…IVDHALDLLR (72 aa)) is small ATPAse domain (RuvB-S). Positions 260–338 (SAGLDATDIK…HLGRTMPDNN (79 aa)) are head domain (RuvB-H). Residues arginine 315 and arginine 320 each coordinate DNA.

The protein belongs to the RuvB family. In terms of assembly, homohexamer. Forms an RuvA(8)-RuvB(12)-Holliday junction (HJ) complex. HJ DNA is sandwiched between 2 RuvA tetramers; dsDNA enters through RuvA and exits via RuvB. An RuvB hexamer assembles on each DNA strand where it exits the tetramer. Each RuvB hexamer is contacted by two RuvA subunits (via domain III) on 2 adjacent RuvB subunits; this complex drives branch migration. In the full resolvosome a probable DNA-RuvA(4)-RuvB(12)-RuvC(2) complex forms which resolves the HJ.

The protein resides in the cytoplasm. The enzyme catalyses ATP + H2O = ADP + phosphate + H(+). Functionally, the RuvA-RuvB-RuvC complex processes Holliday junction (HJ) DNA during genetic recombination and DNA repair, while the RuvA-RuvB complex plays an important role in the rescue of blocked DNA replication forks via replication fork reversal (RFR). RuvA specifically binds to HJ cruciform DNA, conferring on it an open structure. The RuvB hexamer acts as an ATP-dependent pump, pulling dsDNA into and through the RuvAB complex. RuvB forms 2 homohexamers on either side of HJ DNA bound by 1 or 2 RuvA tetramers; 4 subunits per hexamer contact DNA at a time. Coordinated motions by a converter formed by DNA-disengaged RuvB subunits stimulates ATP hydrolysis and nucleotide exchange. Immobilization of the converter enables RuvB to convert the ATP-contained energy into a lever motion, pulling 2 nucleotides of DNA out of the RuvA tetramer per ATP hydrolyzed, thus driving DNA branch migration. The RuvB motors rotate together with the DNA substrate, which together with the progressing nucleotide cycle form the mechanistic basis for DNA recombination by continuous HJ branch migration. Branch migration allows RuvC to scan DNA until it finds its consensus sequence, where it cleaves and resolves cruciform DNA. The polypeptide is Holliday junction branch migration complex subunit RuvB (Levilactobacillus brevis (strain ATCC 367 / BCRC 12310 / CIP 105137 / JCM 1170 / LMG 11437 / NCIMB 947 / NCTC 947) (Lactobacillus brevis)).